A 699-amino-acid polypeptide reads, in one-letter code: Proline-rich receptor-like protein kinase PERK7 (699 aa).

Positions 1 to 167 are disordered; that stretch reads MAEGQSPENS…TSNSGSNSSS (167 aa). The Extracellular portion of the chain corresponds to 1 to 172; sequence MAEGQSPENS…SNSSSNDGLN (172 aa). Composition is skewed to pro residues over residues 9-23 and 43-68; these read NSPP…PSPP and SPPP…PPLP. N-linked (GlcNAc...) asparagine glycosylation occurs at N70. Residues 100-121 are compositionally biased toward low complexity; sequence PPQQSDNNGNKGNNNENNKGND. N131 is a glycosylation site (N-linked (GlcNAc...) asparagine). Over residues 148–158 the composition is skewed to polar residues; sequence HSQPRSLAPPT. Residue N164 is glycosylated (N-linked (GlcNAc...) asparagine). Residues 173–193 traverse the membrane as a helical segment; the sequence is IGAVIGLVAAAGILFIVMILL. Residues 194 to 699 lie on the Cytoplasmic side of the membrane; that stretch reads CVCCFRKKKK…SKTTTTNRGI (506 aa). The residue at position 325 (T325) is a Phosphothreonine. The 280-residue stretch at 336 to 615 folds into the Protein kinase domain; it reads FSKDRLLGQG…VRTLEGDASL (280 aa). Residues 342 to 350 and K364 contribute to the ATP site; that span reads LGQGGFGYV. Phosphotyrosine is present on Y410. D461 functions as the Proton acceptor in the catalytic mechanism. Residues S465 and S494 each carry the phosphoserine modification. A phosphothreonine mark is found at T495 and T500. Y508 carries the phosphotyrosine modification. Disordered regions lie at residues 609 to 639 and 658 to 699; these read LEGD…DYEM and DYGA…NRGI. Over residues 687–699 the composition is skewed to polar residues; the sequence is GSTSKTTTTNRGI.

The protein belongs to the protein kinase superfamily. Ser/Thr protein kinase family. As to expression, mostly expressed in flower buds.

It localises to the cell membrane. It carries out the reaction L-seryl-[protein] + ATP = O-phospho-L-seryl-[protein] + ADP + H(+). The enzyme catalyses L-threonyl-[protein] + ATP = O-phospho-L-threonyl-[protein] + ADP + H(+). The chain is Proline-rich receptor-like protein kinase PERK7 (PERK7) from Arabidopsis thaliana (Mouse-ear cress).